The following is a 199-amino-acid chain: Glycerol-3-phosphate acyltransferase (199 aa).

5 consecutive transmembrane segments (helical) span residues 5-25 (AYLL…IIFC), 54-74 (AAIG…LIAF), 82-102 (AIGL…FFQF), 114-134 (VFFS…LIVF), and 154-174 (YIWC…CLLI).

This sequence belongs to the PlsY family. In terms of assembly, probably interacts with PlsX.

The protein localises to the cell inner membrane. It catalyses the reaction an acyl phosphate + sn-glycerol 3-phosphate = a 1-acyl-sn-glycero-3-phosphate + phosphate. Its pathway is lipid metabolism; phospholipid metabolism. In terms of biological role, catalyzes the transfer of an acyl group from acyl-phosphate (acyl-PO(4)) to glycerol-3-phosphate (G3P) to form lysophosphatidic acid (LPA). This enzyme utilizes acyl-phosphate as fatty acyl donor, but not acyl-CoA or acyl-ACP. In Haemophilus ducreyi (strain 35000HP / ATCC 700724), this protein is Glycerol-3-phosphate acyltransferase.